A 304-amino-acid polypeptide reads, in one-letter code: UDP-3-O-acyl-N-acetylglucosamine deacetylase (304 aa).

The Zn(2+) site is built by histidine 78, histidine 237, and aspartate 241. The Proton donor role is filled by histidine 264.

It belongs to the LpxC family. Zn(2+) is required as a cofactor.

It carries out the reaction a UDP-3-O-[(3R)-3-hydroxyacyl]-N-acetyl-alpha-D-glucosamine + H2O = a UDP-3-O-[(3R)-3-hydroxyacyl]-alpha-D-glucosamine + acetate. The protein operates within glycolipid biosynthesis; lipid IV(A) biosynthesis; lipid IV(A) from (3R)-3-hydroxytetradecanoyl-[acyl-carrier-protein] and UDP-N-acetyl-alpha-D-glucosamine: step 2/6. Functionally, catalyzes the hydrolysis of UDP-3-O-myristoyl-N-acetylglucosamine to form UDP-3-O-myristoylglucosamine and acetate, the committed step in lipid A biosynthesis. This Marinobacter nauticus (strain ATCC 700491 / DSM 11845 / VT8) (Marinobacter aquaeolei) protein is UDP-3-O-acyl-N-acetylglucosamine deacetylase.